A 689-amino-acid chain; its full sequence is Potassium-transporting ATPase ATP-binding subunit (689 aa).

The next 4 helical transmembrane spans lie at 35 to 55, 62 to 82, 220 to 240, and 260 to 280; these read VMFV…AILA, AAFT…ANFA, ALTI…ATLF, and VLVA…LSAI. Asp313 functions as the 4-aspartylphosphate intermediate in the catalytic mechanism. ATP is bound by residues Asp350, Glu354, 383 to 390, and Lys401; that span reads FSAQTRMS. Residues Asp524 and Asp528 each coordinate Mg(2+). Transmembrane regions (helical) follow at residues 594 to 614, 622 to 642, and 665 to 685; these read FAII…LNVM, AIMS…PLAL, and VGGL…LVAL.

The protein belongs to the cation transport ATPase (P-type) (TC 3.A.3) family. Type IA subfamily. In terms of assembly, the system is composed of three essential subunits: KdpA, KdpB and KdpC.

It localises to the cell inner membrane. The enzyme catalyses K(+)(out) + ATP + H2O = K(+)(in) + ADP + phosphate + H(+). In terms of biological role, part of the high-affinity ATP-driven potassium transport (or Kdp) system, which catalyzes the hydrolysis of ATP coupled with the electrogenic transport of potassium into the cytoplasm. This subunit is responsible for energy coupling to the transport system and for the release of the potassium ions to the cytoplasm. The protein is Potassium-transporting ATPase ATP-binding subunit of Serratia proteamaculans (strain 568).